The primary structure comprises 31 residues: Kallikrein-1 (31 aa).

One can recognise a Peptidase S1 domain in the interval 1-31; the sequence is VIGGQECARDSHPWQAAVYHFSDIECGGVLV.

The protein belongs to the peptidase S1 family. Kallikrein subfamily.

The enzyme catalyses Preferential cleavage of Arg-|-Xaa bonds in small molecule substrates. Highly selective action to release kallidin (lysyl-bradykinin) from kininogen involves hydrolysis of Met-|-Xaa or Leu-|-Xaa.. In terms of biological role, glandular kallikreins cleave Met-Lys and Arg-Ser bonds in kininogen to release Lys-bradykinin. This Cavia porcellus (Guinea pig) protein is Kallikrein-1.